The primary structure comprises 721 residues: Dipeptidyl-peptidase 5 (721 aa).

The signal sequence occupies residues 1–18 (MGAFRWLSIAAAASTALA). Asparagine 75, asparagine 94, asparagine 151, and asparagine 254 each carry an N-linked (GlcNAc...) asparagine glycan. The tract at residues 271–297 (ARPINGPDSPGTPKGIKGDSSSPVFSP) is disordered. N-linked (GlcNAc...) asparagine glycans are attached at residues asparagine 380 and asparagine 450. Serine 560 serves as the catalytic Charge relay system. The N-linked (GlcNAc...) asparagine glycan is linked to asparagine 607. Active-site charge relay system residues include aspartate 643 and histidine 675.

Belongs to the peptidase S9C family. Post-translationally, N-glycosylated. Expressed in mycelia and conidia.

It is found in the secreted. Functionally, may be involved in metabolism of dipeptides or may affect host defense mechanisms. Has a substrate specificity limited to the hydrolysis of X-Ala, His-Ser, and Ser-Tyr dipeptides at a neutral pH optimum. In Aspergillus fumigatus (strain CBS 144.89 / FGSC A1163 / CEA10) (Neosartorya fumigata), this protein is Dipeptidyl-peptidase 5.